We begin with the raw amino-acid sequence, 288 residues long: tRNA pseudouridine synthase A (288 aa).

The active-site Nucleophile is the D58. Residue Y124 participates in substrate binding.

It belongs to the tRNA pseudouridine synthase TruA family. In terms of assembly, homodimer.

The catalysed reaction is uridine(38/39/40) in tRNA = pseudouridine(38/39/40) in tRNA. In terms of biological role, formation of pseudouridine at positions 38, 39 and 40 in the anticodon stem and loop of transfer RNAs. This is tRNA pseudouridine synthase A from Corynebacterium diphtheriae (strain ATCC 700971 / NCTC 13129 / Biotype gravis).